The primary structure comprises 140 residues: Translation initiation factor 2 subunit beta (140 aa).

This sequence belongs to the eIF-2-beta/eIF-5 family. As to quaternary structure, heterotrimer composed of an alpha, a beta and a gamma chain.

In terms of biological role, eIF-2 functions in the early steps of protein synthesis by forming a ternary complex with GTP and initiator tRNA. The polypeptide is Translation initiation factor 2 subunit beta (Pyrococcus furiosus (strain ATCC 43587 / DSM 3638 / JCM 8422 / Vc1)).